The chain runs to 494 residues: Tripartite motif-containing protein 5 (494 aa).

Position 2 is an N-acetylalanine (A2). The RING-type zinc finger occupies 15–59 (CPICLELLTEPLSLDCGHSFCQACITANHKESMLHQGERSCPLCR). A B box-type zinc finger spans residues 91 to 132 (QNVDHCARHGEKLLLFCEQDGNIICWLCERSQEHRGHNTFLV). Zn(2+)-binding residues include C96, H99, C118, and H124. A coiled-coil region spans residues 132 to 223 (VEEVAQKYRE…RLVQSENDMV (92 aa)). A required for interaction with GABARAP and for autophagy region spans residues 186–199 (FKQLRDILDCEESN). Positions 280 to 494 (PDLKRMLQVL…LPMTLCSPRS (215 aa)) constitute a B30.2/SPRY domain.

Belongs to the TRIM/RBCC family. In terms of assembly, can form homodimers and homotrimers. In addition to lower-order dimerization, also exhibits a higher-order multimerization and both low- and high-order multimerizations are essential for its restriction activity. Interacts with BTBD1 and BTBD2. Interacts with PSMC4, PSMC5, PSMD7 and HSPA8/HSC70. Interacts (via B30.2/SPRY domain) with HSPA1A/B. Interacts with PSMC2, MAP3K7/TAK1, TAB2 and TAB3. Interacts with SQSTM1. Interacts with TRIM6 and TRIM34. Interacts with ULK1 (phosphorylated form), GABARAP, GABARAPL1, GABARAPL2, MAP1LC3A, MAP1LC3C and BECN1. Degraded in a proteasome-independent fashion in the absence of viral infection but in a proteasome-dependent fashion following exposure to restriction sensitive virus. Post-translationally, autoubiquitinated in a RING finger- and UBE2D2-dependent manner. Monoubiquitinated by TRIM21. Deubiquitinated by Yersinia YopJ. Ubiquitination may not lead to proteasomal degradation.

The protein resides in the cytoplasm. Its subcellular location is the nucleus. It catalyses the reaction S-ubiquitinyl-[E2 ubiquitin-conjugating enzyme]-L-cysteine + [acceptor protein]-L-lysine = [E2 ubiquitin-conjugating enzyme]-L-cysteine + N(6)-ubiquitinyl-[acceptor protein]-L-lysine.. It participates in protein modification; protein ubiquitination. Capsid-specific restriction factor that prevents infection from non-host-adapted retroviruses. Blocks viral replication early in the life cycle, after viral entry but before reverse transcription. In addition to acting as a capsid-specific restriction factor, also acts as a pattern recognition receptor that activates innate immune signaling in response to the retroviral capsid lattice. Binding to the viral capsid triggers its E3 ubiquitin ligase activity, and in concert with the heterodimeric ubiquitin conjugating enzyme complex UBE2V1-UBE2N (also known as UBC13-UEV1A complex) generates 'Lys-63'-linked polyubiquitin chains, which in turn are catalysts in the autophosphorylation of the MAP3K7/TAK1 complex (includes TAK1, TAB2, and TAB3). Activation of the MAP3K7/TAK1 complex by autophosphorylation results in the induction and expression of NF-kappa-B and MAPK-responsive inflammatory genes, thereby leading to an innate immune response in the infected cell. Restricts infection by simian immunodeficiency virus (SIV-mac). Plays a role in regulating autophagy through activation of autophagy regulator BECN1 by causing its dissociation from its inhibitors BCL2 and TAB2. This chain is Tripartite motif-containing protein 5 (TRIM5), found in Saimiri sciureus (Common squirrel monkey).